Reading from the N-terminus, the 204-residue chain is Urease accessory protein UreG (204 aa).

11–18 (GPVGAGKT) is a binding site for GTP.

The protein belongs to the SIMIBI class G3E GTPase family. UreG subfamily. As to quaternary structure, homodimer. UreD, UreF and UreG form a complex that acts as a GTP-hydrolysis-dependent molecular chaperone, activating the urease apoprotein by helping to assemble the nickel containing metallocenter of UreC. The UreE protein probably delivers the nickel.

It is found in the cytoplasm. Its function is as follows. Facilitates the functional incorporation of the urease nickel metallocenter. This process requires GTP hydrolysis, probably effectuated by UreG. This chain is Urease accessory protein UreG, found in Staphylococcus saprophyticus subsp. saprophyticus (strain ATCC 15305 / DSM 20229 / NCIMB 8711 / NCTC 7292 / S-41).